A 354-amino-acid chain; its full sequence is Opsin-5 (354 aa).

Topologically, residues 1–33 (MALNHTALPQDERLPHYLRDGDPFASKLSWEAD) are extracellular. Asparagine 4 carries N-linked (GlcNAc...) asparagine glycosylation. The helical transmembrane segment at 34–54 (LVAGFYLTIIGILSTFGNGYV) threads the bilayer. The Cytoplasmic portion of the chain corresponds to 55–74 (LYMSSRRKKKLRPAEIMTIN). The chain crosses the membrane as a helical span at residues 75–95 (LAVCDLGISVVGKPFTIISCF). Over 96–108 (CHRWVFGWIGCRW) the chain is Extracellular. Cysteine 106 and cysteine 183 form a disulfide bridge. The helical transmembrane segment at 109 to 129 (YGWAGFFFGCGSLITMTAVSL) threads the bilayer. At 130–150 (DRYLKICYLSYGVWLKRKHAY) the chain is on the cytoplasmic side. The helical transmembrane segment at 151–171 (ICLAAIWAYASFWTTMPLVGL) threads the bilayer. Topologically, residues 172-197 (GDYVPEPFGTSCTLDWWLAQASVGGQ) are extracellular. A helical transmembrane segment spans residues 198–218 (VFILNILFFCLLLPTAVIVFS). Over 219–252 (YVKIIAKVKSSSKEVAHFDSRIHSSHVLEMKLTK) the chain is Cytoplasmic. A helical membrane pass occupies residues 253-273 (VAMLICAGFLIAWIPYAVVSV). At 274 to 288 (WSAFGRPDSIPIQLS) the chain is on the extracellular side. The helical transmembrane segment at 289–309 (VVPTLLAKSAAMYNPIIYQVI) threads the bilayer. The residue at position 296 (lysine 296) is an N6-(retinylidene)lysine. Residues 310 to 353 (DYKFACCQTGGLKATKKKSLEGFRLHTVTTVRKSSAVLEIHEEW) lie on the Cytoplasmic side of the membrane. S-palmitoyl cysteine attachment occurs at residues cysteine 315 and cysteine 316.

It belongs to the G-protein coupled receptor 1 family. Opsin subfamily. It is uncertain whether Cys-315 or Cys-316 is palmitoylated. Detected in brain and retina and cell lines derived from neural retina.

Its subcellular location is the cell membrane. In terms of biological role, G-protein coupled receptor which selectively activates G(i) type G proteins via ultraviolet A (UVA) light-mediated activation in the retina. Preferentially binds the chromophore 11-cis retinal and is a bistable protein that displays emission peaks at 380 nm (UVA light) and 470 nm (blue light). Required for the light-response in the inner plexiform layer, and contributes to the regulation of the light-response in the nerve fiber layer, via phosphorylated DAT/SLC6A3 dopamine uptake. Involved in local corneal and retinal circadian rhythm photoentrainment via modulation of the UVA light-induced phase-shift of the retina clock. Acts as a circadian photoreceptor in the outer ear, via modulation of circadian clock-gene expression in response to violet light during the light-to-dark transition phase and night phase of the circadian cycle. Required in the retina to negatively regulate hyaloid vessel regression during postnatal development via light-dependent OPN5-SLC32A1-DRD2-VEGFR2 signaling. Involved in the light-dependent regulation of retina and vitreous compartment dopamine levels. The protein is Opsin-5 (OPN5) of Homo sapiens (Human).